The chain runs to 86 residues: Large ribosomal subunit protein bL27 (86 aa).

Residues 1 to 22 form a disordered region; that stretch reads MATKKAGGSSRNGRDSAGRRLG.

Belongs to the bacterial ribosomal protein bL27 family.

This is Large ribosomal subunit protein bL27 from Rickettsia rickettsii (strain Iowa).